The following is a 379-amino-acid chain: Bifunctional riboflavin kinase/FMN phosphatase (379 aa).

Residue Ser2 is modified to N-acetylserine. Asp17 functions as the Nucleophile; for FMN phosphatase activity in the catalytic mechanism. Mg(2+)-binding residues include Asp17 and Asp19. The active-site Proton donor; for FMN phosphatase activity is the Asp19. ATP-binding residues include Gly248, Lys254, Thr260, and Asn262. Mg(2+) is bound at residue Thr260. Glu312 functions as the Nucleophile; for riboflavin kinase activity in the catalytic mechanism. 3 residues coordinate ATP: Leu315, His317, and Tyr324. Arg337 and Phe342 together coordinate FMN.

It in the N-terminal section; belongs to the HAD-like hydrolase superfamily. CbbY/CbbZ/Gph/YieH family. In the C-terminal section; belongs to the flavokinase family. Monomer. Mg(2+) serves as cofactor.

It catalyses the reaction riboflavin + ATP = FMN + ADP + H(+). The enzyme catalyses FMN + H2O = riboflavin + phosphate. The protein operates within cofactor biosynthesis; FMN biosynthesis; FMN from riboflavin (ATP route): step 1/1. Its function is as follows. Bifunctional enzyme that catalyzes the hydrolysis of flavin-mononucleotide (FMN) to riboflavin (vitamin B2) and the phosphorylation of riboflavin to form (FMN) coenzyme. The chain is Bifunctional riboflavin kinase/FMN phosphatase from Arabidopsis thaliana (Mouse-ear cress).